Here is a 224-residue protein sequence, read N- to C-terminus: uncharacterized protein (224 aa).

In terms of biological role, the presence of the two linear plasmids, termed pGKL1 and pGKL2, in strains of Kluyveromyces lactis confers the killer phenotype to the host cell, by promoting the secretion of a toxin able to inhibit the growth of sensitive strains. This is an uncharacterized protein from Kluyveromyces lactis (strain ATCC 8585 / CBS 2359 / DSM 70799 / NBRC 1267 / NRRL Y-1140 / WM37) (Yeast).